Consider the following 209-residue polypeptide: uncharacterized protein (209 aa).

This is an uncharacterized protein from Sulfolobus islandicus rod-shaped virus 1 (SIRV-1).